A 199-amino-acid polypeptide reads, in one-letter code: GTP cyclohydrolase 1 (199 aa).

Cys-89, His-92, and Cys-161 together coordinate Zn(2+).

This sequence belongs to the GTP cyclohydrolase I family. Homomer.

It catalyses the reaction GTP + H2O = 7,8-dihydroneopterin 3'-triphosphate + formate + H(+). It participates in cofactor biosynthesis; 7,8-dihydroneopterin triphosphate biosynthesis; 7,8-dihydroneopterin triphosphate from GTP: step 1/1. The protein is GTP cyclohydrolase 1 of Bifidobacterium longum (strain DJO10A).